A 362-amino-acid polypeptide reads, in one-letter code: Ferrochelatase (362 aa).

Positions 212 and 294 each coordinate Fe cation.

This sequence belongs to the ferrochelatase family.

Its subcellular location is the cytoplasm. It carries out the reaction heme b + 2 H(+) = protoporphyrin IX + Fe(2+). Its pathway is porphyrin-containing compound metabolism; protoheme biosynthesis; protoheme from protoporphyrin-IX: step 1/1. Its function is as follows. Catalyzes the ferrous insertion into protoporphyrin IX. In Leptospira biflexa serovar Patoc (strain Patoc 1 / Ames), this protein is Ferrochelatase.